The primary structure comprises 417 residues: UDP-N-acetylglucosamine 1-carboxyvinyltransferase (417 aa).

22–23 (KN) provides a ligand contact to phosphoenolpyruvate. UDP-N-acetyl-alpha-D-glucosamine is bound at residue Arg92. Cys116 acts as the Proton donor in catalysis. At Cys116 the chain carries 2-(S-cysteinyl)pyruvic acid O-phosphothioketal. Residues Asp304 and Val326 each contribute to the UDP-N-acetyl-alpha-D-glucosamine site.

It belongs to the EPSP synthase family. MurA subfamily.

Its subcellular location is the cytoplasm. It carries out the reaction phosphoenolpyruvate + UDP-N-acetyl-alpha-D-glucosamine = UDP-N-acetyl-3-O-(1-carboxyvinyl)-alpha-D-glucosamine + phosphate. It participates in cell wall biogenesis; peptidoglycan biosynthesis. Cell wall formation. Adds enolpyruvyl to UDP-N-acetylglucosamine. This Syntrophotalea carbinolica (strain DSM 2380 / NBRC 103641 / GraBd1) (Pelobacter carbinolicus) protein is UDP-N-acetylglucosamine 1-carboxyvinyltransferase.